We begin with the raw amino-acid sequence, 192 residues long: ADP-ribose glycohydrolase AF_1521 (192 aa).

Positions 1–192 (MEVLFEAKVG…VALKVFERSL (192 aa)) constitute a Macro domain. Substrate contacts are provided by residues 19 to 21 (GDI), 32 to 34 (AAN), 39 to 44 (HGGGVA), and 140 to 146 (VSAGIYG).

The catalysed reaction is 5-O-(ADP-D-ribosyl)-L-glutamyl-[protein] + H2O = L-glutamyl-[protein] + ADP-D-ribose + H(+). The enzyme catalyses 4-O-(ADP-D-ribosyl)-L-aspartyl-[protein] + H2O = L-aspartyl-[protein] + ADP-D-ribose + H(+). It carries out the reaction alpha-NAD(+) + H2O = ADP-D-ribose + nicotinamide + H(+). In terms of biological role, removes ADP-ribose from aspartate and glutamate residues in proteins bearing a single ADP-ribose moiety. Inactive towards proteins bearing poly-ADP-ribose. Catalyzes removal of a phosphate group from ADP-ribose 1''-phosphate (Appr1p), but with low efficiency. This chain is ADP-ribose glycohydrolase AF_1521, found in Archaeoglobus fulgidus (strain ATCC 49558 / DSM 4304 / JCM 9628 / NBRC 100126 / VC-16).